Here is a 100-residue protein sequence, read N- to C-terminus: Protein SAMBA (100 aa).

Residues 1 to 40 (MNGASPAHSLVSTTAVAGGGGSSGAAAGLDDFHFPPDIPS) form a disordered region.

As to quaternary structure, interacts with CDC27B and CYCA2-3. As to expression, expressed in embryos, germinating seeds, hypocotyls and pollen grains.

Functionally, plays an important role in organ size control. Acts as negative regulator of the anaphase-promoting complex/cyclosome (APC/C). Regulates cell proliferation during early development by targeting CYCA2-3 for APC/C-mediated degradation. Required for mitosis I during pollen microspore development. This chain is Protein SAMBA, found in Arabidopsis thaliana (Mouse-ear cress).